The chain runs to 172 residues: NADH-quinone oxidoreductase subunit B (172 aa).

The [4Fe-4S] cluster site is built by cysteine 46, cysteine 47, cysteine 111, and cysteine 141.

This sequence belongs to the complex I 20 kDa subunit family. As to quaternary structure, NDH-1 is composed of 14 different subunits. Subunits NuoB, C, D, E, F, and G constitute the peripheral sector of the complex. Requires [4Fe-4S] cluster as cofactor.

The protein resides in the cell membrane. It carries out the reaction a quinone + NADH + 5 H(+)(in) = a quinol + NAD(+) + 4 H(+)(out). Functionally, NDH-1 shuttles electrons from NADH, via FMN and iron-sulfur (Fe-S) centers, to quinones in the respiratory chain. The immediate electron acceptor for the enzyme in this species is believed to be a menaquinone. Couples the redox reaction to proton translocation (for every two electrons transferred, four hydrogen ions are translocated across the cytoplasmic membrane), and thus conserves the redox energy in a proton gradient. This is NADH-quinone oxidoreductase subunit B from Bacillus cereus (strain G9842).